A 171-amino-acid polypeptide reads, in one-letter code: Mitochondrial import inner membrane translocase subunit Tim17-A (171 aa).

An intrachain disulfide couples Cys9 to Cys78. Transmembrane regions (helical) follow at residues Cys17–Phe37, Gly63–Asp77, and Val113–Leu133. The disordered stretch occupies residues Gly144–Gln171. Positions Pro151–Pro163 are enriched in low complexity.

Belongs to the Tim17/Tim22/Tim23 family. As to quaternary structure, component of the TIM23 complex at least composed of TIMM23, TIMM17 (TIMM17A or TIMM17B) and TIMM50. The complex interacts with the TIMM44 component of the PAM complex and with DNAJC15. Degraded by YMEL1 downstream of the integrated stress response (ISR).

It is found in the mitochondrion inner membrane. In terms of biological role, essential component of the TIM23 complex, a complex that mediates the translocation of transit peptide-containing proteins across the mitochondrial inner membrane. This chain is Mitochondrial import inner membrane translocase subunit Tim17-A (TIMM17A), found in Homo sapiens (Human).